Here is a 1161-residue protein sequence, read N- to C-terminus: Voltage-gated inwardly rectifying potassium channel KCNH2 (1161 aa).

The Cytoplasmic segment spans residues 1–405 (MPVRRGHVAP…RIHRWTILHY (405 aa)). In terms of domain architecture, PAS spans 17–88 (TIIRKFEGQS…AAQIAQALLG (72 aa)). Residues 92–144 (RKVEIAFYRKDGSCFLCLVDVVPVKNEDGAVIMFILNFEVVMEKDMVGSPARD) enclose the PAC domain. The disordered stretch occupies residues 233–286 (ALVGSCSPPPPVSAPGPHPSLRAHSLNPDASGSSCSLARTRSRESCASVRRASS). A phosphoserine mark is found at S239 and S245. Residues 239-250 (SPPPPVSAPGPH) are compositionally biased toward pro residues. Positions 260-271 (PDASGSSCSLAR) are enriched in polar residues. S285, S286, S322, and S353 each carry phosphoserine. Residues 406 to 426 (SPFKAVWDWLILLLVIYTAVF) form a helical membrane-spanning segment. Residues 427–452 (TPYSAAFLLKETEEGPPAPECGYACQ) lie on the Extracellular side of the membrane. The helical transmembrane segment at 453 to 473 (PLAVVDLIVDIMFIVDILINF) threads the bilayer. Over 474–497 (RTTYVNANEEVVSHPGRIAVHYFK) the chain is Cytoplasmic. A helical transmembrane segment spans residues 498–518 (GWFLIDMVAAIPFDLLIFGSG). The Extracellular portion of the chain corresponds to 519–522 (SEEL). The chain crosses the membrane as a helical; Voltage-sensor span at residues 523–543 (IGLLKTARLLRLVRVARKLDR). Over 544–549 (YSEYGA) the chain is Cytoplasmic. A helical transmembrane segment spans residues 550-570 (AVLLLLMCTFALIAHWLACIW). Over 571-613 (YAIGNMEQPHMDSRIGWLHNLGDQMGKPYNSSGLGGPSIKDKY) the chain is Extracellular. A glycan (N-linked (GlcNAc...) asparagine) is linked at N600. An intramembrane region (pore-forming) is located at residues 614-634 (VTGLYFTFSSLTSVGFGNVSP). Residues 626–631 (SVGFGN) carry the Selectivity filter motif. At 635–640 (NTNSEK) the chain is on the extracellular side. The chain crosses the membrane as a helical span at residues 641–661 (IFSICVMLIGSLMYASIFGNV). The Cytoplasmic portion of the chain corresponds to 662 to 1161 (SAIIQRLYSG…LHRHGSDPGS (500 aa)). The tract at residues 744 to 844 (PFRGATKDCL…IHRDDLLEVL (101 aa)) is cNMP-binding domain. Residues 872–985 (GSPGSTEWEG…TEDCEKSSDT (114 aa)) form a disordered region. S873 and S876 each carry phosphoserine. Basic residues predominate over residues 885–894 (RQRKRKLSFR). Low complexity predominate over residues 930-941 (GESPSSGPSSPE). Positions 962–972 (SPRPPGEPPGG) are enriched in pro residues. R1016 is modified (omega-N-methylarginine). Residues 1037 to 1064 (RGDVESRLDALQRQLNRLETRLSADMAT) adopt a coiled-coil conformation. Residues 1121 to 1161 (ELPPGAPELPQEGPTRRLSLPGQLGALTSQPLHRHGSDPGS) are disordered. Residue S1139 is modified to Phosphoserine.

It belongs to the potassium channel family. H (Eag) (TC 1.A.1.20) subfamily. Kv11.1/KCNH2 sub-subfamily. As to quaternary structure, the potassium channel is probably composed of a homo- or heterotetrameric complex of pore-forming alpha subunits that can associate with modulating beta subunits. Interacts with DNAJB12 and DNAJB14; chaperones DNAJB12 and DNAJB14 promote tetramerization. Heteromultimer with KCNH6/ERG2 and KCNH7/ERG3. Interacts with ALG10B. Forms a stable complex with KCNE1 or KCNE2, and that this heteromultimerization regulates Inward rectifier potassium channel activity. Interacts with CANX. The core-glycosylated, but not the fully glycosylated form interacts with RNF207. Interacts with NDFIP1 and NDFIP2; this interaction decreases the cell membrane expression by targeting KCNH2, through interaction with NEDD4L, for the degradation through the multivesicular bodies (MVBs)-lysosomal pathway. Post-translationally, phosphorylated on serine and threonine residues. Phosphorylation by PKA inhibits ion conduction. In terms of tissue distribution, detected in heart, both in atrium and in left ventricle.

It is found in the cell membrane. The enzyme catalyses K(+)(in) = K(+)(out). Pore-forming (alpha) subunit of voltage-gated inwardly rectifying potassium channel. Characterized by unusual gating kinetics by producing relatively small outward currents during membrane depolarization and large inward currents during subsequent repolarization which reflect a rapid inactivation during depolarization and quick recovery from inactivation but slow deactivation (closing) during repolarization. Channel properties are modulated by cAMP and subunit assembly. Forms a stable complex with KCNE1 or KCNE2, and that this heteromultimerization regulates inward rectifier potassium channel activity. This chain is Voltage-gated inwardly rectifying potassium channel KCNH2, found in Oryctolagus cuniculus (Rabbit).